A 408-amino-acid polypeptide reads, in one-letter code: Zinc-regulated transporter 1 (408 aa).

The next 3 helical transmembrane spans lie at 64-84, 101-121, and 141-161; these read IGAIFVILATSLIGMNLPLVL, LFARYFGSGVILATAFIHLLA, and WAPGICLISCWFILLLEVLLN. A phosphothreonine mark is found at Thr-234 and Thr-237. 5 helical membrane-spanning segments follow: residues 254 to 274, 279 to 299, 315 to 335, 351 to 371, and 387 to 407; these read FIILESSIILHSVIIGLTTAV, FKTLFPVIIFHQAFEGCGLGS, WVLGVIYSLVTPIGMAAGLGV, GVLDAISSGILVYAGLVELLA, and LIYLLACSMAGTGVMALLGKW.

It belongs to the ZIP transporter (TC 2.A.5) family.

It is found in the endoplasmic reticulum membrane. Functionally, high-affinity zinc transport protein. Regulates intracellular zinc levels. This Schizosaccharomyces pombe (strain 972 / ATCC 24843) (Fission yeast) protein is Zinc-regulated transporter 1 (zrt1).